We begin with the raw amino-acid sequence, 1381 residues long: MAERANLVFHNKVIDGTAIKRLISRLIDHFGMAYTSHILDQVKTLGFQQATATSISLGIDDLLTIPSKGWLVQDAEQQSLILEKHHHYGNVHAVEKLRQSIEIWYATSEYLRQEMNPNFRMTDPFNPVHMMSFSGARGNASQVHQLVGMRGLMSDPQGQMIDLPIQSNLREGLSLTEYIISCYGARKGVVDTAVRTSDAGYLTRRLVEVVQHIVVRRTDCGTIRGISVSPRNKNRMMSERIFIQTLIGRVLADDIYIGSRCVAFRNQDLGIGLVNRFITFGTQSISIRTPFTCRSTSWICRLCYGRSPTHGDLVELGEAVGIIAGQSIGEPGTQLTLRTFHTGGVFTGGTAEHVRAPYNGKIKFNEDLVHPTRTRHGHPAFLCYIDLSVIIESDDIIHNVTIPPKSFLLVQNDQYVESEQVIAEIREGASTFHFKERVRKYIYSGSEGEMHWSTDVSHAPEFTYSNVHLLPKTSHLWILSGGSCGSSLIRFSIHKDQDQMNIPFLSAQIKSISSLSVNNDQVSQKFCSSDFYDKKKSGITDYSELNGIVGTSHYNFIYSTIFHENSDLLAKRRRNRFLIPFQSIQEQEKEFIRHSGISIEIPINGIFRRNSIFAFFDDPRYRRKSSGILKYGTLRADSIIQKEDMIEYRGGQKFKTKYEMKVDRFFFIPEEVHILPESSVIMVQNYSIIGVNTRITLNIRSQVGGLIRVERKKKRIELKIFSGDIHFPDKTDKISRHSGILIPPGRGKTNPKESKKLKNWIYVQRITPTKKKFFVLVRPVGTYEIANSINLATLFPQDLFREKDNIELRVFNYILYGNGKPTRGISDTSIQLVRTCLVLNWDQDTKNSSLEEVRAFFIEVSTKGLIRDFIRIGLVKSHISYIRKRNNPPDSGLISADHINPFYSISPKAFILQQSLRQNHGTVRMFLNSNKESPSLLILSSSNCFRIGLFNHVKYHNVINQSIKKNPLITIKNSSGPLGTAIQISNCYSFLPLLTYNKISAIKYLQLDKVKYSFQVINSYLIDENGRSFNLDRYSNGVLNPLKLNWYFLHQNYYHNYCEETSTIISLGQFFCENLCIAKKEPHLKSGQVLIVQKDSIVIRSAKPYLATPGAKVHGHYREILYEGDTLVTFIYEKSRSGDITQGLPKVEQVLEVRSIDSISLNLEKRIKGWNKCITRILGIPWGFLIGAELTIVQSRISLVNKIQKVYRSQGVQIHNRHIEIIVRQITSKVLVSEEGMSNVFLPGELIGLLRAERTGRALEEAICYRAILLGITRASLNTQSFISEASFQETARVLAKAALRGRIDWLKGLKENVVLGGMIPAGTGFNKGLVHCSRQHTNTLLEKRTKNLSLFEGDMKDILFYHREFFDSSISISKSSFSRI.

Zn(2+) contacts are provided by Cys220, Cys293, Cys300, and Cys303.

The protein belongs to the RNA polymerase beta' chain family. RpoC2 subfamily. In terms of assembly, in plastids the minimal PEP RNA polymerase catalytic core is composed of four subunits: alpha, beta, beta', and beta''. When a (nuclear-encoded) sigma factor is associated with the core the holoenzyme is formed, which can initiate transcription. Requires Zn(2+) as cofactor.

The protein resides in the plastid. Its subcellular location is the chloroplast. The catalysed reaction is RNA(n) + a ribonucleoside 5'-triphosphate = RNA(n+1) + diphosphate. In terms of biological role, DNA-dependent RNA polymerase catalyzes the transcription of DNA into RNA using the four ribonucleoside triphosphates as substrates. In Draba nemorosa (Woodland whitlowgrass), this protein is DNA-directed RNA polymerase subunit beta''.